Consider the following 445-residue polypeptide: Putative diacyglycerol O-acyltransferase Rv2285 (445 aa).

H135 functions as the Proton acceptor in the catalytic mechanism.

The protein belongs to the long-chain O-acyltransferase family.

It carries out the reaction an acyl-CoA + a 1,2-diacyl-sn-glycerol = a triacyl-sn-glycerol + CoA. The enzyme catalyses di-(9Z)-octadecenoylglycerol + (9Z)-octadecenoyl-CoA = 1,2,3-tri-(9Z-octadecenoyl)-glycerol + CoA. It participates in glycerolipid metabolism; triacylglycerol biosynthesis. Its function is as follows. Catalyzes the terminal and only committed step in triacylglycerol synthesis by using diacylglycerol and fatty acyl CoA as substrates. Required for storage lipid synthesis. Functionally, upon expression in E.coli functions weakly as a triacylglycerol synthase, making triacylglycerol (TG) from diolein and long-chain fatty acyl-CoA. Has very weak wax synthase activity, incorporating palmityl alcohol into wax esters in the presence of palmitoyl-CoA. In Mycobacterium tuberculosis (strain ATCC 25618 / H37Rv), this protein is Putative diacyglycerol O-acyltransferase Rv2285.